Reading from the N-terminus, the 362-residue chain is Class I histocompatibility antigen, Gogo-B*0103 alpha chain (362 aa).

An N-terminal signal peptide occupies residues 1-24; that stretch reads MRVTAPRTLLLLLSAALALTETWA. Residues 25–114 form an alpha-1 region; that stretch reads GSHSMRYFDT…ALRYYNQSEA (90 aa). Residues 25-308 are Extracellular-facing; it reads GSHSMRYFDT…EPSSQSTIPI (284 aa). Residue Asn110 is glycosylated (N-linked (GlcNAc...) asparagine). Residues 115 to 206 form an alpha-2 region; that stretch reads GSHTIQWMYG…ENGRETLQRA (92 aa). 2 disulfide bridges follow: Cys125–Cys188 and Cys227–Cys283. Positions 207 to 298 are alpha-3; sequence DTPKTHVTHH…GLPKPLTLRW (92 aa). Residues 209-295 form the Ig-like C1-type domain; the sequence is PKTHVTHHPI…QHEGLPKPLT (87 aa). The segment at 299–308 is connecting peptide; that stretch reads EPSSQSTIPI. A helical membrane pass occupies residues 309–332; sequence VGIVAGLAVLAVVVIGAVVTAVIC. The Cytoplasmic portion of the chain corresponds to 333–362; it reads RRKSSGGKGGSYSQAASSDSAQGSDVSLTA. Residues 335–362 form a disordered region; the sequence is KSSGGKGGSYSQAASSDSAQGSDVSLTA. A compositionally biased stretch (low complexity) spans 343 to 362; it reads SYSQAASSDSAQGSDVSLTA.

This sequence belongs to the MHC class I family. Heterodimer of an alpha chain and a beta chain (beta-2-microglobulin).

It localises to the membrane. Involved in the presentation of foreign antigens to the immune system. The protein is Class I histocompatibility antigen, Gogo-B*0103 alpha chain of Gorilla gorilla gorilla (Western lowland gorilla).